A 56-amino-acid chain; its full sequence is uncharacterized protein (56 aa).

This is an uncharacterized protein from Acidianus convivator (ABV).